A 299-amino-acid polypeptide reads, in one-letter code: ATP phosphoribosyltransferase (299 aa).

This sequence belongs to the ATP phosphoribosyltransferase family. Long subfamily. It depends on Mg(2+) as a cofactor.

Its subcellular location is the cytoplasm. It carries out the reaction 1-(5-phospho-beta-D-ribosyl)-ATP + diphosphate = 5-phospho-alpha-D-ribose 1-diphosphate + ATP. The protein operates within amino-acid biosynthesis; L-histidine biosynthesis; L-histidine from 5-phospho-alpha-D-ribose 1-diphosphate: step 1/9. With respect to regulation, feedback inhibited by histidine. Functionally, catalyzes the condensation of ATP and 5-phosphoribose 1-diphosphate to form N'-(5'-phosphoribosyl)-ATP (PR-ATP). Has a crucial role in the pathway because the rate of histidine biosynthesis seems to be controlled primarily by regulation of HisG enzymatic activity. This is ATP phosphoribosyltransferase from Shewanella baltica (strain OS155 / ATCC BAA-1091).